We begin with the raw amino-acid sequence, 112 residues long: MTIAKTILLFVLAAAAEIGGAWLVWQAVREGKEWWWAGLGVLALGVYGFAATLQPDAHFGRILAAYGGVFVAGSLAWGMVFDGFRPDRWDIIGSVICLLGVAVIMFAPRNAG.

The next 4 membrane-spanning stretches (helical) occupy residues 7-27 (ILLF…VWQA), 33-53 (EWWW…AATL), 62-82 (ILAA…MVFD), and 88-108 (RWDI…MFAP).

It belongs to the UPF0060 family.

It localises to the cell membrane. This is UPF0060 membrane protein Arth_4238 from Arthrobacter sp. (strain FB24).